A 302-amino-acid polypeptide reads, in one-letter code: AT-hook motif nuclear-localized protein 29 (302 aa).

The interval 1–95 (MDGGYDQSGG…KPPVIVTRDS (95 aa)) is disordered. A compositionally biased stretch (pro residues) spans 32 to 44 (QLHPLPQPQPQPQ). The a.T hook DNA-binding region spans 72–84 (KRPRGRPPGSKNK). Residues 96-241 (PNVLRSHVLE…DEGGEGGEGG (146 aa)) form the PPC domain. A required for the binding to non-AHL interactors region spans residues 164-169 (GRFEIL). The tract at residues 229–279 (PLEDEGGEGGEGGEVGEGGGGEGGPPPATSSSPPSGAGQGQLRGNMSGYDQ) is disordered. The segment covering 237-251 (GGEGGEVGEGGGGEG) has biased composition (gly residues).

Homodimer. Interacts with AHL5, AHL12, AHL25, AHL27, TCP4, TCP13 and EF114. As to expression, expressed in the hypocotyl and the vascular tissue of seedling.

It localises to the nucleus. Its function is as follows. Transcription factor that specifically binds AT-rich DNA sequences related to the nuclear matrix attachment regions (MARs). Acts redundantly with AHL18, AHL22 and AHL27 in the regulation of flowering and regulation of the hypocotyl elongation. Acts redundantly with AHL27/ESC to modulate hypocotyl growth inhibition in response to light. The protein is AT-hook motif nuclear-localized protein 29 of Arabidopsis thaliana (Mouse-ear cress).